A 145-amino-acid polypeptide reads, in one-letter code: 3-hydroxyacyl-[acyl-carrier-protein] dehydratase FabZ (145 aa).

Histidine 47 is a catalytic residue.

The protein belongs to the thioester dehydratase family. FabZ subfamily.

Its subcellular location is the cytoplasm. The enzyme catalyses a (3R)-hydroxyacyl-[ACP] = a (2E)-enoyl-[ACP] + H2O. Functionally, involved in unsaturated fatty acids biosynthesis. Catalyzes the dehydration of short chain beta-hydroxyacyl-ACPs and long chain saturated and unsaturated beta-hydroxyacyl-ACPs. The polypeptide is 3-hydroxyacyl-[acyl-carrier-protein] dehydratase FabZ (Acidovorax sp. (strain JS42)).